The sequence spans 318 residues: Protein W (318 aa).

Disordered stretches follow at residues 1 to 23 and 38 to 318; these read MDQD…GGRE and SEPT…KKGA. Residues 7-20 show a composition bias toward basic and acidic residues; that stretch reads ILKEDSEVEREAPG. Residues 50-59 show a composition bias toward polar residues; it reads LHNTINTPQG. Ser68 is modified (phosphoserine; by host). Residues 83-101 are compositionally biased toward basic and acidic residues; that stretch reads RSGEESRVSGRTSKPEAEA. A Phosphoserine; by host modification is found at Ser125. Basic and acidic residues predominate over residues 150–168; sequence GIEDENREMAAHPDKRGED. Residues 191–206 are compositionally biased toward polar residues; the sequence is ASNNGRSMEPGSSHSA. Phosphoserine; by host is present on residues Ser192, Ser249, Ser257, and Ser260.

This chain is Protein W (P/V/C), found in Sendai virus (strain Z) (SeV).